We begin with the raw amino-acid sequence, 252 residues long: Aquaporin TIP4-4 (252 aa).

2 helical membrane-spanning segments follow: residues 20–40 and 53–73; these read AVLAELILTFLFVFAGVGSAM and VVGLTAVALAHTLVVAVMVSA. Positions 83–85 match the NPA 1 motif; it reads NPA. Helical transmembrane passes span 105–125, 143–163, and 168–188; these read VAAQLLGSTLACLLLAFLAVA, GVLMEAVLTFSLLFAVYATVV, and AVGGMGPLLVGLVVGANVLAG. Positions 197 to 199 match the NPA 2 motif; the sequence is NPA. The helical transmembrane segment at 216 to 236 threads the bilayer; sequence VYWVGPLIGGPLAGLVYDGLF.

The protein belongs to the MIP/aquaporin (TC 1.A.8) family. TIP (TC 1.A.8.10) subfamily.

It localises to the vacuole membrane. Functionally, aquaporins facilitate the transport of water and small neutral solutes across cell membranes. This chain is Aquaporin TIP4-4 (TIP4-4), found in Zea mays (Maize).